We begin with the raw amino-acid sequence, 614 residues long: Dihydroxy-acid dehydratase (614 aa).

Residue Asp81 coordinates Mg(2+). Position 122 (Cys122) interacts with [2Fe-2S] cluster. Residues Asp123 and Lys124 each contribute to the Mg(2+) site. Residue Lys124 is modified to N6-carboxylysine. Cys195 provides a ligand contact to [2Fe-2S] cluster. Glu491 lines the Mg(2+) pocket. Catalysis depends on Ser517, which acts as the Proton acceptor.

This sequence belongs to the IlvD/Edd family. As to quaternary structure, homodimer. [2Fe-2S] cluster is required as a cofactor. Requires Mg(2+) as cofactor.

The catalysed reaction is (2R)-2,3-dihydroxy-3-methylbutanoate = 3-methyl-2-oxobutanoate + H2O. It carries out the reaction (2R,3R)-2,3-dihydroxy-3-methylpentanoate = (S)-3-methyl-2-oxopentanoate + H2O. The protein operates within amino-acid biosynthesis; L-isoleucine biosynthesis; L-isoleucine from 2-oxobutanoate: step 3/4. It functions in the pathway amino-acid biosynthesis; L-valine biosynthesis; L-valine from pyruvate: step 3/4. In terms of biological role, functions in the biosynthesis of branched-chain amino acids. Catalyzes the dehydration of (2R,3R)-2,3-dihydroxy-3-methylpentanoate (2,3-dihydroxy-3-methylvalerate) into 2-oxo-3-methylpentanoate (2-oxo-3-methylvalerate) and of (2R)-2,3-dihydroxy-3-methylbutanoate (2,3-dihydroxyisovalerate) into 2-oxo-3-methylbutanoate (2-oxoisovalerate), the penultimate precursor to L-isoleucine and L-valine, respectively. This is Dihydroxy-acid dehydratase from Actinobacillus succinogenes (strain ATCC 55618 / DSM 22257 / CCUG 43843 / 130Z).